Reading from the N-terminus, the 378-residue chain is MQFFSLKTRIVLGEGSLSYIKSVAKKHSRVLIFSSKSMRVHGFLNETMNYVEDANAEVEAITGVPAEPSYEYVESIMPKVREFQPDLIVALGGGSVIDVAKAVKVFYDAPELKFEEVAFISRFEKPKPIPKLKTPLIAIPSTSGAGSEVSAASVLKKGDIKYNLVSFEIAPEFAILDPRLPRTMPKEVARNSGLDVLVHGIEAYTTTAATPFSDAMAIKAIKLVYKWLPLSVQGDEKARENVHYAATMAGIAFLNARLGLCHSLSHKAAWIAPHGLLNAIFLPYVMEFNMRSEYARKRYAEIARELGFNTAQELIEVIREFNEMLGVPKLSELVSEEEFLSKLDEMSEKAYHDPLINFNPVEPSIEEIKELYKRAFYD.

The Fe cation site is built by aspartate 195, histidine 199, histidine 262, and histidine 274.

This sequence belongs to the iron-containing alcohol dehydrogenase family. It depends on Fe(2+) as a cofactor. Mn(2+) serves as cofactor.

The catalysed reaction is a primary alcohol + NAD(+) = an aldehyde + NADH + H(+). It catalyses the reaction butan-1-ol + NAD(+) = butanal + NADH + H(+). It carries out the reaction hexan-1-ol + NAD(+) = hexanal + NADH + H(+). The enzyme catalyses ethanol + NAD(+) = acetaldehyde + NADH + H(+). Its function is as follows. Thermostable type III alcohol dehydrogenase. For oxidation activity, the best substrates are 1-butanol and 1-hexanol, followed by ethanol. Shows lower activity with ethylene glycol, isopentanol, isopropanol and glycerol. Displays higher reduction activity in the presence of butanal, followed by acetaldehyde. Has lower activity with hexanal and acetone. In Thermococcus barophilus, this protein is Alcohol dehydrogenase.